Reading from the N-terminus, the 320-residue chain is Lipoyl synthase (320 aa).

A disordered region spans residues 1 to 27 (MRVEIDHRNSGGGKLRHPEKQHRPDNP). The span at 16-25 (RHPEKQHRPD) shows a compositional bias: basic and acidic residues. [4Fe-4S] cluster-binding residues include Cys-61, Cys-66, Cys-72, Cys-87, Cys-91, Cys-94, and Ser-300. The 217-residue stretch at 73–289 (WSQRHATMMI…AAMARAKGFL (217 aa)) folds into the Radical SAM core domain.

Belongs to the radical SAM superfamily. Lipoyl synthase family. It depends on [4Fe-4S] cluster as a cofactor.

Its subcellular location is the cytoplasm. It carries out the reaction [[Fe-S] cluster scaffold protein carrying a second [4Fe-4S](2+) cluster] + N(6)-octanoyl-L-lysyl-[protein] + 2 oxidized [2Fe-2S]-[ferredoxin] + 2 S-adenosyl-L-methionine + 4 H(+) = [[Fe-S] cluster scaffold protein] + N(6)-[(R)-dihydrolipoyl]-L-lysyl-[protein] + 4 Fe(3+) + 2 hydrogen sulfide + 2 5'-deoxyadenosine + 2 L-methionine + 2 reduced [2Fe-2S]-[ferredoxin]. Its pathway is protein modification; protein lipoylation via endogenous pathway; protein N(6)-(lipoyl)lysine from octanoyl-[acyl-carrier-protein]: step 2/2. Catalyzes the radical-mediated insertion of two sulfur atoms into the C-6 and C-8 positions of the octanoyl moiety bound to the lipoyl domains of lipoate-dependent enzymes, thereby converting the octanoylated domains into lipoylated derivatives. This chain is Lipoyl synthase, found in Acidiphilium cryptum (strain JF-5).